The sequence spans 342 residues: Transcriptional regulator of the unfolded protein response hacA (342 aa).

The interval 1 to 105 is disordered; that stretch reads MEDNFASVVE…TSRERKRLEM (105 aa). Composition is skewed to basic and acidic residues over residues 35–48 and 74–88; these read PETK…EEKK and KTED…ERVL. Positions 80–143 constitute a bZIP domain; it reads EQRRIERVLR…NRLSQQLAQL (64 aa). The basic motif stretch occupies residues 82 to 135; it reads RRIERVLRNRAAAQTSRERKRLEMEKLENEKIQMEQQNQFLLQRLSQMEAENNR. Positions 136-143 are leucine-zipper; the sequence is LSQQLAQL. 2 disordered regions span residues 146–167 and 306–330; these read EVRN…SPTL and EPAH…GAST. Residues 315–330 show a composition bias toward polar residues; the sequence is TPYQTSGLQPSLGAST.

It belongs to the bZIP family.

The protein localises to the nucleus. Master transcriptional regulator of the unfolded protein response (UPR) that recognizes and binds to the UPR element (UPRE) in the promoter of UPR-regulated genes. In the canonical UPR pathway, the ireA RNase splices the cytoplasmic mRNA hacA, which alters the reading frame to allow translation of the bZIP transcription factor hacA. Induces the expression of pmrA, scrA and spfA in response to UPR. The polypeptide is Transcriptional regulator of the unfolded protein response hacA (Aspergillus fumigatus (strain ATCC MYA-4609 / CBS 101355 / FGSC A1100 / Af293) (Neosartorya fumigata)).